The chain runs to 40 residues: Subtilisin-like serine protease AS-E1 (40 aa).

Residues Pro4–Tyr40 form the Peptidase S8 domain. Residue Asp36 is the Charge relay system of the active site.

Belongs to the peptidase S8 family. Homodimer.

With respect to regulation, strongly inhibited by antipain and PMSF. Inhibited by benzamidine and aprotinin by 80% and 17% respectively. Little or no inhibition by EDTA, E-64, iodoacetic acid, leupeptin and FUT-175. Its function is as follows. Subtilisin-like serine protease. Cleaves prothrombin at 155-Arg-|-Ser-156, 45-Thr-|-Ala-46 and 316-Tyr-|-Ile-317 to produce meizothrombin(desF1)-like molecules. Degrades fibrinogen. Inhibits plasma coagulation. The sequence is that of Subtilisin-like serine protease AS-E1 from Acremonium sp.